A 140-amino-acid chain; its full sequence is ATP synthase epsilon chain (140 aa).

It belongs to the ATPase epsilon chain family. In terms of assembly, F-type ATPases have 2 components, CF(1) - the catalytic core - and CF(0) - the membrane proton channel. CF(1) has five subunits: alpha(3), beta(3), gamma(1), delta(1), epsilon(1). CF(0) has three main subunits: a, b and c.

It localises to the cell inner membrane. Functionally, produces ATP from ADP in the presence of a proton gradient across the membrane. This is ATP synthase epsilon chain from Xanthomonas axonopodis pv. citri (strain 306).